A 93-amino-acid chain; its full sequence is Class I hydrophobin SSP1 (93 aa).

Positions 1-26 are cleaved as a signal peptide; the sequence is MKYITAISMLATAALTAATPLNGVEA. 4 disulfides stabilise this stretch: cysteine 39-cysteine 71, cysteine 47-cysteine 65, cysteine 48-cysteine 56, and cysteine 72-cysteine 89.

Belongs to the fungal hydrophobin family. Self-assembles to form functional amyloid fibrils called rodlets. Self-assembly into fibrillar rodlets occurs spontaneously at hydrophobic:hydrophilic interfaces and the rodlets further associate laterally to form amphipathic monolayers.

The protein resides in the secreted. It is found in the cell wall. Functionally, aerial growth, conidiation, and dispersal of filamentous fungi in the environment rely upon a capability of their secreting small amphipathic proteins called hydrophobins (HPBs) with low sequence identity. Class I can self-assemble into an outermost layer of rodlet bundles on aerial cell surfaces, conferring cellular hydrophobicity that supports fungal growth, development and dispersal; whereas Class II form highly ordered films at water-air interfaces through intermolecular interactions but contribute nothing to the rodlet structure. SSP1 is a class I hydrophobin that acts as an effector in the ericoid mycorrhizal interaction with Vaccinium myrtillus. May enhance attachment of the fungus to the root surface and protect the fungal hypha from plant defense compounds. The sequence is that of Class I hydrophobin SSP1 from Oidiodendron maius (strain Zn).